The sequence spans 78 residues: Translational regulator CsrA (78 aa).

It belongs to the CsrA/RsmA family. In terms of assembly, homodimer; the beta-strands of each monomer intercalate to form a hydrophobic core, while the alpha-helices form wings that extend away from the core.

The protein resides in the cytoplasm. A translational regulator that binds mRNA to regulate translation initiation and/or mRNA stability. Usually binds in the 5'-UTR at or near the Shine-Dalgarno sequence preventing ribosome-binding, thus repressing translation. Its main target seems to be the major flagellin gene, while its function is anatagonized by FliW. The protein is Translational regulator CsrA of Caldicellulosiruptor bescii (strain ATCC BAA-1888 / DSM 6725 / KCTC 15123 / Z-1320) (Anaerocellum thermophilum).